A 258-amino-acid polypeptide reads, in one-letter code: Tritrans,polycis-undecaprenyl-diphosphate synthase (geranylgeranyl-diphosphate specific) (258 aa).

The active site involves D37. D37 provides a ligand contact to Mg(2+). Substrate-binding positions include 38 to 41 (GNRR), H54, and 82 to 84 (STE). N85 acts as the Proton acceptor in catalysis. Residues F86, R88, R207, and 213 to 215 (RIS) each bind substrate. E226 is a binding site for Mg(2+).

Belongs to the UPP synthase family. In terms of assembly, homodimer. Requires Mg(2+) as cofactor.

It catalyses the reaction geranylgeranyl diphosphate + 7 isopentenyl diphosphate = tri-trans,hepta-cis-undecaprenyl diphosphate + 7 diphosphate. Functionally, catalyzes the sequential condensation of isopentenyl diphosphate (IPP) with geranylgeranyl diphosphate (GGPP) to yield (2Z,6Z,10Z,14Z,18Z,22Z,26Z,30E,34E,38E)-undecaprenyl diphosphate (tritrans,heptacis-UPP). It is probably the precursor of glycosyl carrier lipids. The chain is Tritrans,polycis-undecaprenyl-diphosphate synthase (geranylgeranyl-diphosphate specific) from Thermoplasma acidophilum (strain ATCC 25905 / DSM 1728 / JCM 9062 / NBRC 15155 / AMRC-C165).